Consider the following 436-residue polypeptide: MGQVLPLVTRQGDRIAIVSGLRTPFARQATAFHGIPAVDLGKMVVGELLARSEIPAEVIEQLVFGQVVQMPEAPNIAREIVLGTGMNVHTDAYSVSRACATSFQAVANVAESLMAGTIRAGIAGGADSSSVLPIGVSKKLARVLVDFNKARIMRQRLKLFSRLRLRDLMPVPPAVAEYSTGLRMGDTAEQMAKTYGITREQQDALAHRSHQRAAQAWSDGKLKEEVMTAFIPPYKQPLVEDNNIRGNSSLADYAKLRPAFDRKHGTVTAANSTPLTDGAAAVILMTESRAKELGLVPLGYLRSYAFTAIDVWQDMLLGPAWSTPLALERAGLTMSDLTLIDMHEAFAAQTLANIQLLGSERFARDVLGRAHATGEVDDSKFNVLGGSIAYGHPFAATGARMITQTLHELRRRGGGFGLVTACAAGGLGAAMVLEAE.

The active-site Acyl-thioester intermediate is C99. Active-site proton acceptor residues include H392 and C422.

Belongs to the thiolase-like superfamily. Thiolase family. In terms of assembly, heterotetramer of two alpha chains (FadJ) and two beta chains (FadI).

The protein localises to the cytoplasm. It carries out the reaction an acyl-CoA + acetyl-CoA = a 3-oxoacyl-CoA + CoA. Its pathway is lipid metabolism; fatty acid beta-oxidation. Catalyzes the final step of fatty acid oxidation in which acetyl-CoA is released and the CoA ester of a fatty acid two carbons shorter is formed. The sequence is that of 3-ketoacyl-CoA thiolase from Escherichia coli O9:H4 (strain HS).